A 416-amino-acid chain; its full sequence is D-amino acid dehydrogenase (416 aa).

3-17 serves as a coordination point for FAD; that stretch reads ITILGSGVIGVTTAY.

It belongs to the DadA oxidoreductase family. FAD is required as a cofactor.

It carries out the reaction a D-alpha-amino acid + A + H2O = a 2-oxocarboxylate + AH2 + NH4(+). It participates in amino-acid degradation; D-alanine degradation; NH(3) and pyruvate from D-alanine: step 1/1. In terms of biological role, oxidative deamination of D-amino acids. This chain is D-amino acid dehydrogenase, found in Brucella abortus (strain S19).